A 316-amino-acid chain; its full sequence is 4-diphosphocytidyl-2-C-methyl-D-erythritol kinase (316 aa).

Residue Lys32 is part of the active site. An ATP-binding site is contributed by 126 to 136 (PVGAGLGGGSA). Residue Asp168 is part of the active site.

This sequence belongs to the GHMP kinase family. IspE subfamily.

It carries out the reaction 4-CDP-2-C-methyl-D-erythritol + ATP = 4-CDP-2-C-methyl-D-erythritol 2-phosphate + ADP + H(+). It participates in isoprenoid biosynthesis; isopentenyl diphosphate biosynthesis via DXP pathway; isopentenyl diphosphate from 1-deoxy-D-xylulose 5-phosphate: step 3/6. Functionally, catalyzes the phosphorylation of the position 2 hydroxy group of 4-diphosphocytidyl-2C-methyl-D-erythritol. The protein is 4-diphosphocytidyl-2-C-methyl-D-erythritol kinase of Bifidobacterium longum subsp. infantis (strain ATCC 15697 / DSM 20088 / JCM 1222 / NCTC 11817 / S12).